The chain runs to 572 residues: Proline--tRNA ligase (572 aa).

The protein belongs to the class-II aminoacyl-tRNA synthetase family. ProS type 1 subfamily. In terms of assembly, homodimer.

The protein resides in the cytoplasm. The catalysed reaction is tRNA(Pro) + L-proline + ATP = L-prolyl-tRNA(Pro) + AMP + diphosphate. Catalyzes the attachment of proline to tRNA(Pro) in a two-step reaction: proline is first activated by ATP to form Pro-AMP and then transferred to the acceptor end of tRNA(Pro). As ProRS can inadvertently accommodate and process non-cognate amino acids such as alanine and cysteine, to avoid such errors it has two additional distinct editing activities against alanine. One activity is designated as 'pretransfer' editing and involves the tRNA(Pro)-independent hydrolysis of activated Ala-AMP. The other activity is designated 'posttransfer' editing and involves deacylation of mischarged Ala-tRNA(Pro). The misacylated Cys-tRNA(Pro) is not edited by ProRS. The sequence is that of Proline--tRNA ligase from Bacillus licheniformis (strain ATCC 14580 / DSM 13 / JCM 2505 / CCUG 7422 / NBRC 12200 / NCIMB 9375 / NCTC 10341 / NRRL NRS-1264 / Gibson 46).